A 568-amino-acid polypeptide reads, in one-letter code: Kelch-like protein 12 (568 aa).

The 68-residue stretch at 33–100 (CDVTLRVEQK…VYTETVHVTV (68 aa)) folds into the BTB domain. Residues 135–236 (CLGIRDFAET…LTPRYITDVI (102 aa)) enclose the BACK domain. Kelch repeat units follow at residues 282–329 (VLLV…SLHD), 331–379 (IYVI…TLGD), 380–426 (MIYV…VASG), 427–473 (IIYC…LLND), 475–520 (IYVV…VLRG), and 522–567 (LYAI…VLRE). The interaction with DVL3 stretch occupies residues 405–568 (QWSMLGDMQT…DAGVCVLREK (164 aa)).

In terms of assembly, component of the BCR(KLHL12) E3 ubiquitin ligase complex, at least composed of CUL3 and KLHL12 and RBX1. This complex interacts with DVL3 upon activation of the Wnt signaling pathway by WNT3A. Interacts with DRD4, KLHL2 and SEC31A. Interacts with PEF1 and PDCD6/ALG-2; interaction takes place in response to cytosolic calcium increase and leads to bridge together the BCR(KLHL12) complex and SEC31 (SEC31A or SEC31B). Post-translationally, ubiquitinated by the SCF(FBXL17) complex, leading to its degradation by the proteasome: ubiquitination by the SCF(FBXL17) complex takes place when aberrant BTB domain dimers are formed.

It localises to the cytoplasmic vesicle. The protein localises to the COPII-coated vesicle. The protein operates within protein modification; protein ubiquitination. In terms of biological role, substrate-specific adapter of a BCR (BTB-CUL3-RBX1) E3 ubiquitin ligase complex that acts as a negative regulator of Wnt signaling pathway and ER-Golgi transport. The BCR(KLHL12) complex is involved in ER-Golgi transport by regulating the size of COPII coats, thereby playing a key role in collagen export, which is required for embryonic stem (ES) cells division: BCR(KLHL12) acts by mediating monoubiquitination of SEC31 (SEC31A or SEC31B). The BCR(KLHL12) complex is also involved in neural crest specification: in response to cytosolic calcium increase, interacts with the heterodimer formed with PEF1 and PDCD6/ALG-2, leading to bridge together the BCR(KLHL12) complex and SEC31 (SEC31A or SEC31B), promoting monoubiquitination of SEC31 and subsequent collagen export. As part of the BCR(KLHL12) complex, also acts as a negative regulator of the Wnt signaling pathway by mediating ubiquitination and subsequent proteolysis of DVL3. The BCR(KLHL12) complex also mediates polyubiquitination of DRD4 and PEF1, without leading to degradation of these proteins. The sequence is that of Kelch-like protein 12 (Klhl12) from Rattus norvegicus (Rat).